Consider the following 1860-residue polypeptide: Collagen alpha-1(XXVII) chain (1860 aa).

The N-terminal stretch at 1–41 (MGAGSARGARGTAAAAAARGGGFLFSWILVSFACHLASTQG) is a signal peptide. A propeptide spans 42–624 (APEDVDILQR…AGSTPFPLLM (583 aa)) (N-terminal propeptide). The Laminin G-like domain occupies 71-236 (QSGFIFTQRA…NYCTHLRKQC (166 aa)). A glycan (N-linked (GlcNAc...) asparagine) is linked at Asn271. 3 disordered regions span residues 278-608 (ALGS…TSSG), 625-772 (GPPG…GSDG), and 851-1625 (LKGD…IQLQ). 2 stretches are compositionally biased toward polar residues: residues 298 to 309 (TKPQRTSPTNPH) and 386 to 409 (HPTQ…QVPP). Pro residues predominate over residues 432-445 (MPRPPPPSTRPLPP). Low complexity-rich tracts occupy residues 446–457 (TTSSSKKPIPTL) and 485–505 (TALS…RPPA). Residues 509–518 (PPTSGTSTPR) are compositionally biased toward polar residues. Low complexity-rich tracts occupy residues 572–588 (TTRP…QTTP) and 599–608 (SSSPRPTSSG). Collagen-like domains follow at residues 625–679 (GPPG…GDPG), 688–747 (GAKG…PGPV), 748–807 (GDPG…DGNP), 808–867 (GELG…SGDP), 871–930 (GDKG…KGKP), 931–990 (GARG…PGPV), 1003–1062 (GEPG…RGAK), 1066–1125 (GPRG…PGTK), 1126–1185 (GLPG…IGQR), 1192–1251 (GDSG…QGEK), 1258–1317 (GAKG…KGIV), 1318–1378 (GPLG…RGKP), 1382–1441 (GQPG…EGIA), 1442–1501 (GPDG…PGQL), 1502–1561 (GPPG…QGPR), and 1562–1621 (GPPG…PGGP). Residues 625–1618 (GPPGPKGDCG…RGRPGPPGPP (994 aa)) form a triple-helical region region. Over residues 654 to 669 (RGPPGPYGNPGLPGPP) the composition is skewed to pro residues. Residues 714–734 (PGPAGHPGEQGQPGPEGSPGA) show a composition bias toward low complexity. 2 stretches are compositionally biased toward low complexity: residues 911–924 (FPGD…NGPE) and 932–944 (ARGL…QLGP). The segment covering 1033 to 1042 (GMPGGMGTPG) has biased composition (gly residues). Over residues 1043 to 1053 (EPGPQGPPGSR) the composition is skewed to pro residues. Residues 1130 to 1142 (EPGPQGPQGPIGP) are compositionally biased toward pro residues. 2 stretches are compositionally biased toward basic and acidic residues: residues 1202 to 1220 (LKGD…EKGQ) and 1241 to 1253 (PEGK…EKGR). Basic and acidic residues-rich tracts occupy residues 1326-1338 (KGEK…DGKA) and 1350-1360 (PVGDRGDRGEP). Low complexity predominate over residues 1449 to 1458 (RDGQAGQQGE). The span at 1572–1587 (IVGPLGILGPSGLPGP) shows a compositional bias: low complexity. The span at 1603–1620 (RGPPGPRGRPGPPGPPGG) shows a compositional bias: pro residues. Positions 1622–1860 (IQLQQDDLGA…RLEVGPACFL (239 aa)) are cleaved as a propeptide — C-terminal propeptide. The Fibrillar collagen NC1 domain occupies 1660–1860 (GEIFKTLHYL…RLEVGPACFL (201 aa)). Intrachain disulfides connect Cys1690–Cys1722, Cys1731–Cys1858, and Cys1767–Cys1811. 4 residues coordinate Ca(2+): Asp1708, Asn1710, Cys1713, and Asp1716. Asn1769 carries N-linked (GlcNAc...) asparagine glycosylation.

It belongs to the fibrillar collagen family.

The protein localises to the secreted. Its subcellular location is the extracellular space. It localises to the extracellular matrix. Functionally, plays a role during the calcification of cartilage and the transition of cartilage to bone. This is Collagen alpha-1(XXVII) chain (COL27A1) from Homo sapiens (Human).